Reading from the N-terminus, the 846-residue chain is Exonuclease 1 (846 aa).

The interval 1–99 (MGIQGLLQFI…RSRRERRQAN (99 aa)) is N-domain. Positions 30, 78, 150, 152, 171, 173, 225, and 270 each coordinate Mg(2+). Positions 129–387 (MAHKVIKAAR…RPESGTVSDA (259 aa)) are interaction with MSH3. An I-domain region spans residues 138–229 (RSQGVDCLVA…ILSGCDYLSS (92 aa)). Positions 372–396 (HRNYSPRPESGTVSDAPQLKENPST) are disordered. A Phosphoserine modification is found at Ser376. A compositionally biased stretch (polar residues) spans 382-396 (GTVSDAPQLKENPST). The segment at 388–490 (PQLKENPSTV…NKFATFLQRK (103 aa)) is interaction with MLH1. The Nuclear localization signal motif lies at 418-421 (KRPR). Phosphoserine occurs at positions 422 and 454. Lys482 carries the N6-acetyllysine modification. The residue at position 581 (Thr581) is a Phosphothreonine. A phosphoserine mark is found at Ser598 and Ser610. Residues 600-846 (PTLGTLRSCF…CGRVQRAIFQ (247 aa)) form an interaction with MSH2 region. A disordered region spans residues 618-781 (FSRTPSPSPS…SIQKRKHHNA (164 aa)). Polar residues-rich tracts occupy residues 620-631 (RTPSPSPSTALQ) and 639-654 (SPTS…VSQL). A Phosphothreonine modification is found at Thr621. Residues Ser623, Ser639, Ser660, and Ser674 each carry the phosphoserine modification. A compositionally biased stretch (basic and acidic residues) spans 655-671 (KSEESSDDESHPLREEA). Polar residues-rich tracts occupy residues 672-689 (CSSQ…SSNA), 713-722 (DSQSDQTSKL), and 743-754 (KSSSADSLSTTK). Position 714 is a phosphoserine; by ATR (Ser714). Position 746 is a phosphoserine (Ser746). Positions 787–846 (LQIKLNELWKNFGFKKDSEKLPPCKKPLSPVRDNIQLTPEAEEDIFNKPECGRVQRAIFQ) are interaction with MLH1.

Belongs to the XPG/RAD2 endonuclease family. EXO1 subfamily. Interacts with the MLH1-PMS2 heterodimer via MLH1. Interacts with MSH3. Interacts with the MSH2-MSH6 heterodimer via MSH2, and this interaction may increase the processivity of the 5'-&gt;3' exonuclease activity. Interacts with PCNA, and this interaction may both stimulate the cryptic 3'-&gt;5' exonuclease activity and suppress the 5'-&gt;3' exonuclease activity. Interacts with WRN, and this interaction stimulates both the 5'-&gt;3' exonuclease activity and cleavage of 5'-overhanging flap structures. Interacts with RECQL/RECQ1, and this interaction stimulates cleavage of 5'-overhanging flap structures. Interacts with DNA helicase ZGRF1; the interaction is increased following DNA damage induction. It depends on Mg(2+) as a cofactor. In terms of processing, phosphorylated upon DNA damage and in response to agents stalling DNA replication, probably by ATM or ATR. Phosphorylation at Ser-454, Thr-621 and Ser-714 is induced upon DNA-damage caused by treatment with hydroxyurea (HU) but not upon IR treatment. The HU-induced EXO1 triple phosphorylation facilitates destabilization/degradation of the protein. As to expression, highly expressed in bone marrow, testis and thymus. Expressed at lower levels in colon, lymph nodes, ovary, placenta, prostate, small intestine, spleen and stomach.

It localises to the nucleus. Its function is as follows. 5'-&gt;3' double-stranded DNA exonuclease which may also possess a cryptic 3'-&gt;5' double-stranded DNA exonuclease activity. Functions in DNA mismatch repair (MMR) to excise mismatch-containing DNA tracts directed by strand breaks located either 5' or 3' to the mismatch. Also exhibits endonuclease activity against 5'-overhanging flap structures similar to those generated by displacement synthesis when DNA polymerase encounters the 5'-end of a downstream Okazaki fragment. Required for somatic hypermutation (SHM) and class switch recombination (CSR) of immunoglobulin genes. Essential for male and female meiosis. This is Exonuclease 1 (EXO1) from Homo sapiens (Human).